The sequence spans 556 residues: Pumilio homolog 11 (556 aa).

Residues 215–556 form the PUM-HD domain; sequence GGSRELDGSA…RIFSKNLWKK (342 aa). Pumilio repeat units follow at residues 238–276, 277–313, 316–351, 353–388, 389–424, 425–459, 460–495, and 496–531; these read SMVDSYGSVYLMAKDQLGCRLLQKFVDEGNFVDVMIIFK, EVINNVIELGTDPFGNYLIQKLIEVCNEEQRTQILIR, SKPGLLVKISINNYGTRVVQKLIETVTTKEQISLVK, ALVPGFLSLFRELNGNHVILNCLKFFSPNDNKFILE, AATKFCIEIATTRHGCCVLQRCVSYSVGEQHEKLVD, EISRNSLLLAQDPFGNYLVQYIIEKKVGGVNVLFE, LRGNYVKLATQKFGSHVVEKCLRYYPESRSQIVNEL, and VSVLNFGYLLQDPYANYVIQCALSKTKGFVRASLVE.

It is found in the cytoplasm. Its function is as follows. Sequence-specific RNA-binding protein that regulates translation and mRNA stability by binding the 3'-UTR of target mRNAs. The sequence is that of Pumilio homolog 11 (APUM11) from Arabidopsis thaliana (Mouse-ear cress).